An 835-amino-acid polypeptide reads, in one-letter code: MKVLALRHSVAQVYADTQTYVHDDSKDEYENAFLISNLTTHNILYINYSVKTLKILNKSGIAAVEIQSPDELFALIRCNFTYDYENNTVYLHDYSYYTNNEIRTDQHWVTKTDIIDYLLPGWKLTYVGYNGKDTRGHYNFSFTCQNAATDDDIIIEYIYSSELDFQTFLLRKIKERMTTSLPIARLSNRVFRDKLFPSIVNIHKRVVNVGPRNESMFTFLNFPTIKQFSNGAYLVKHTIKLKQERWLGKRVSQFDIGQYKNMLNVVTTIYYYYNLHSSKPVIYMLGSAPSYWIYDIRQYSDFTFETWDPLDTPYSTTHHKELFFDKDVTKLKDNSILYIDIRTDRGNMDWKEWRKVVEQQTVSNLSIAYKYLSTGKAKVCCVKLTAMDLELPITAKLLHHPTTEIRSEFYAILDVWDISTIKRFVPKGVFYAFINNVTTENVFIQPPFKLRTLPNDYIVALYALSNDFNPRQDIINLINKQKQSLITVRINNTFKDEPKVNFKNIYDWTFLPTDFEIKDSIITSYDGCLGIFGLSTSLSSKPTGNNHLFIINGTDKYYKLDQYANHMGISRRSHQVRFSESATSYSGYIFRDLSNNNFNLIGTNIENSVSGHVYNALIYYRYNYAFDLKRWIYLHSIGEVTVEGGKYYEHAPIELIYACRSAKEFAALQDDLTVLRYANEIEGYINKVYSITYADDPNYFIGVRFDSIPYEYDVKVPHLTFGVLFISDNMIHDVITVLKKMKTELFKMEVSTSYTYMLSDGIHVANASGVLSTYFKLYNMFYRNHITFGQSRMFIPHITLSFSNKRTVRIENTRLKINSIYLRKIKGETVFDMSE.

Positions 171 to 245 (RKIKERMTTS…KHTIKLKQER (75 aa)) are N7-methyltransferase activity. Residues 246-428 (WLGKRVSQFD…STIKRFVPKG (183 aa)) are 2'-O-methyltransferase activity. An N7-methyltransferase activity region spans residues 429 to 555 (VFYAFINNVT…NHLFIINGTD (127 aa)). The GTase/RTPase activity stretch occupies residues 556–692 (KYYKLDQYAN…GYINKVYSIT (137 aa)). A 2'-5'-phosphodiesterase activity region spans residues 693–835 (YADDPNYFIG…KGETVFDMSE (143 aa)). Residues H718, T720, H797, and T799 each act as for 2'-5'-phosphodiesterase activity in the active site.

This sequence belongs to the rotavirus VP3 family. As to quaternary structure, interacts with VP1. Interacts with VP2.

Its subcellular location is the virion. The catalysed reaction is a 5'-end diphospho-ribonucleoside in mRNA + GTP + H(+) = a 5'-end (5'-triphosphoguanosine)-ribonucleoside in mRNA + diphosphate. It catalyses the reaction a 5'-end (5'-triphosphoguanosine)-ribonucleoside in mRNA + S-adenosyl-L-methionine = a 5'-end (N(7)-methyl 5'-triphosphoguanosine)-ribonucleoside in mRNA + S-adenosyl-L-homocysteine. The enzyme catalyses 5'-triphosphoadenylyl-(2'-&gt;5')-adenylyl-(2'-&gt;5')-adenosine + 2 H2O = 2 AMP + ATP + 2 H(+). Functionally, multifunctional enzyme involved in mRNA capping. Catalyzes the formation of the 5' cap structure on the viral plus-strand transcripts. Specifically binds to GTP and displays guanylyltransferase and methyltransferase activities. Has affinity for ssRNA but not for dsRNA. Capping activity is non-specific and caps RNAs that initiate with either a G or an A residue. Together with VP1 polymerase, forms a VP1-VP3 complex positioned near the channels situated at each of the five-fold vertices of the core. Following infection, the outermost layer of the virus is lost, leaving a double-layered particle (DLP) made up of the core and VP6 shell. VP1 then catalyzes the transcription of fully conservative plus-strand genomic RNAs that are capped by VP3 and extruded through the DLP's channels into the cytoplasm where they function as mRNAs for translation of viral proteins. DLPs probably have an RNA triphosphatase activity as well, whereas open cores do not. In terms of biological role, counteracts the host innate immune response thanks to its phosphodiesterase that degrades the 5'-triphosphorylated, 2'-5' linked adenylate oligomers produced by the host cell IFN-inducible 2',5'-oligoadenylate synthetase (OAS). The host RNaseL is therefore not activated. This Rotavirus A (strain RVA/Pig/United States/OSU/1977/G5P9[7]) (RV-A) protein is Protein VP3.